A 183-amino-acid polypeptide reads, in one-letter code: Probable cobalt-precorrin-6B C(15)-methyltransferase (decarboxylating) (183 aa).

Residues threonine 19, 43–47 (GCGSG), aspartate 64, and alanine 92 contribute to the S-adenosyl-L-methionine site.

Belongs to the methyltransferase superfamily. Archaeal-type CbiT family.

It carries out the reaction Co-precorrin-6B + S-adenosyl-L-methionine = Co-precorrin-7 + S-adenosyl-L-homocysteine + CO2. It functions in the pathway cofactor biosynthesis; adenosylcobalamin biosynthesis; cob(II)yrinate a,c-diamide from sirohydrochlorin (anaerobic route): step 8/10. Functionally, catalyzes the methylation of C-15 in cobalt-precorrin-6B followed by the decarboxylation of C-12 to form cobalt-precorrin-7. The polypeptide is Probable cobalt-precorrin-6B C(15)-methyltransferase (decarboxylating) (Methanocaldococcus jannaschii (strain ATCC 43067 / DSM 2661 / JAL-1 / JCM 10045 / NBRC 100440) (Methanococcus jannaschii)).